Reading from the N-terminus, the 342-residue chain is 11-beta-hydroxysteroid dehydrogenase-like 6 (342 aa).

A helical; Signal-anchor for type II membrane protein membrane pass occupies residues 10-30 (FLFPLLTLYALLVFYPTYQRL). NADP(+) contacts are provided by residues 54–80 (GAAS…VDIR) and Asp-105. Ser-184 serves as a coordination point for substrate. The active-site Proton acceptor is the Tyr-197. Residues 197–201 (YCASK) and Lys-201 each bind NADP(+).

The protein belongs to the short-chain dehydrogenases/reductases (SDR) family.

The protein localises to the membrane. The protein is 11-beta-hydroxysteroid dehydrogenase-like 6 (HSD6) of Arabidopsis thaliana (Mouse-ear cress).